The sequence spans 66 residues: Large ribosomal subunit protein bL35 (66 aa).

This sequence belongs to the bacterial ribosomal protein bL35 family.

The sequence is that of Large ribosomal subunit protein bL35 from Beijerinckia indica subsp. indica (strain ATCC 9039 / DSM 1715 / NCIMB 8712).